The chain runs to 123 residues: Phospholipase A2 (123 aa).

Disulfide bonds link Cys11/Cys77, Cys27/Cys123, Cys29/Cys45, Cys44/Cys105, Cys51/Cys98, Cys61/Cys91, and Cys84/Cys96. Ca(2+) contacts are provided by Tyr28, Gly30, and Gly32. His48 is an active-site residue. Residue Asp49 participates in Ca(2+) binding. The active site involves Asp99.

This sequence belongs to the phospholipase A2 family. As to quaternary structure, monomer or homodimer. Ca(2+) serves as cofactor. Post-translationally, activated by trypsin cleavage in the duodenum. Can also be activated by thrombin or autocatalytically.

The protein localises to the secreted. The catalysed reaction is a 1,2-diacyl-sn-glycero-3-phosphocholine + H2O = a 1-acyl-sn-glycero-3-phosphocholine + a fatty acid + H(+). The enzyme catalyses 1,2-ditetradecanoyl-sn-glycero-3-phosphocholine + H2O = 1-tetradecanoyl-sn-glycero-3-phosphocholine + tetradecanoate + H(+). It catalyses the reaction 1,2-dihexadecanoyl-sn-glycero-3-phosphocholine + H2O = 1-hexadecanoyl-sn-glycero-3-phosphocholine + hexadecanoate + H(+). It carries out the reaction 1-hexadecanoyl-2-(9Z-octadecenoyl)-sn-glycero-3-phosphocholine + H2O = 1-hexadecanoyl-sn-glycero-3-phosphocholine + (9Z)-octadecenoate + H(+). The catalysed reaction is 1-hexadecanoyl-2-(5Z,8Z,11Z,14Z-eicosatetraenoyl)-sn-glycero-3-phosphocholine + H2O = 1-hexadecanoyl-sn-glycero-3-phosphocholine + (5Z,8Z,11Z,14Z)-eicosatetraenoate + H(+). The enzyme catalyses 1-hexadecanoyl-2-(9Z-octadecenoyl)-sn-glycero-3-phospho-(1'-sn-glycerol) + H2O = 1-hexadecanoyl-sn-glycero-3-phospho-(1'-sn-glycerol) + (9Z)-octadecenoate + H(+). It catalyses the reaction N-hexadecanoyl-1,2-di-(9Z-octadecenoyl)-sn-glycero-3-phosphoethanolamine + H2O = N-hexadecanoyl-1-(9Z-octadecenoyl)-sn-glycero-3-phosphoethanolamine + (9Z)-octadecenoate + H(+). It carries out the reaction 1-hexadecanoyl-2-(9Z,12Z-octadecadienoyl)-sn-glycero-3-phosphoethanolamine + H2O = 1-hexadecanoyl-sn-glycero-3-phosphoethanolamine + (9Z,12Z)-octadecadienoate + H(+). The catalysed reaction is N,1-dihexadecanoyl-2-(9Z,12Z-octadecadienoyl)-sn-glycero-3-phosphoethanolamine + H2O = N,1-dihexadecanoyl-sn-glycero-3-phosphoethanolamine + (9Z,12Z)-octadecadienoate + H(+). Its function is as follows. Secretory calcium-dependent phospholipase A2 that primarily targets dietary phospholipids in the intestinal tract. Hydrolyzes the ester bond of the fatty acyl group attached at sn-2 position of phospholipids (phospholipase A2 activity) with preference for phosphatidylethanolamines and phosphatidylglycerols over phosphatidylcholines. May play a role in the biosynthesis of N-acyl ethanolamines that regulate energy metabolism and inflammation in the intestinal tract. Hydrolyzes N-acyl phosphatidylethanolamines to N-acyl lysophosphatidylethanolamines, which are further cleaved by a lysophospholipase D to release N-acyl ethanolamines. May act in an autocrine and paracrine manner. Has anti-helminth activity in a process regulated by gut microbiota. Upon helminth infection of intestinal epithelia, directly affects phosphatidylethanolamine contents in the membrane of helminth larvae, likely controlling an array of phospholipid-mediated cellular processes such as membrane fusion and cell division while providing for better immune recognition, ultimately reducing larvae integrity and infectivity. In Ovis aries (Sheep), this protein is Phospholipase A2 (PLA2G1B).